A 1161-amino-acid polypeptide reads, in one-letter code: PAN2-PAN3 deadenylation complex catalytic subunit pan2 (1161 aa).

WD repeat units follow at residues 20–59 (GLPTAATTIAFDDVSELLWAGNEFGRITSFYGPELQRYTS) and 276–315 (ANVSFMLGIDISPSGEALAINDAECSIHLWGSPSKIHFNE). The tract at residues 316–452 (MSKEVEFADV…GAKLNGEAED (137 aa)) is linker. The region spanning 453 to 822 (DPLLKYSNVE…SPCILAYQAK (370 aa)) is the USP domain. The Exonuclease domain occupies 871-1049 (VALDTEFVDL…IEDARMALRL (179 aa)). The a divalent metal cation site is built by Asp874, Glu876, Asp983, and Asp1042. One copy of the WD 4 repeat lies at 1009–1060 (NRRLSLRYLAWAVFKEYIQEEPADNNQGHDSIEDARMALRLWKKFQEYEDAG). The tract at residues 1092–1161 (RPGTAVTMQN…GDFFGGSPLK (70 aa)) is disordered. A compositionally biased stretch (polar residues) spans 1097–1110 (VTMQNSSGRNTPST). A compositionally biased stretch (low complexity) spans 1116–1129 (AATATATTSAPATP). Gly residues predominate over residues 1145–1155 (TFGGPGAGDFF).

This sequence belongs to the peptidase C19 family. PAN2 subfamily. As to quaternary structure, forms a heterotrimer with an asymmetric homodimer of the regulatory subunit pan3 to form the poly(A)-nuclease (PAN) deadenylation complex. Requires a divalent metal cation as cofactor.

The protein localises to the cytoplasm. It carries out the reaction Exonucleolytic cleavage of poly(A) to 5'-AMP.. Its activity is regulated as follows. Positively regulated by the regulatory subunit pan3. Functionally, catalytic subunit of the poly(A)-nuclease (PAN) deadenylation complex, one of two cytoplasmic mRNA deadenylases involved in mRNA turnover. PAN specifically shortens poly(A) tails of RNA and the activity is stimulated by poly(A)-binding protein pab1. PAN deadenylation is followed by rapid degradation of the shortened mRNA tails by the CCR4-NOT complex. Deadenylated mRNAs are then degraded by two alternative mechanisms, namely exosome-mediated 3'-5' exonucleolytic degradation, or deadenylation-dependent mRNA decaping and subsequent 5'-3' exonucleolytic degradation by xrn1. May also be involved in post-transcriptional maturation of mRNA poly(A) tails. The protein is PAN2-PAN3 deadenylation complex catalytic subunit pan2 of Neosartorya fischeri (strain ATCC 1020 / DSM 3700 / CBS 544.65 / FGSC A1164 / JCM 1740 / NRRL 181 / WB 181) (Aspergillus fischerianus).